A 473-amino-acid chain; its full sequence is Membrane-bound acylglycerophosphatidylinositol O-acyltransferase MBOAT7 (473 aa).

Residues 1–5 (MTPEE) lie on the Cytoplasmic side of the membrane. A helical membrane pass occupies residues 6-22 (WTYLMVLLISIPVGFLF). The Lumenal portion of the chain corresponds to 23–33 (KKAGPGLKRWG). A helical transmembrane segment spans residues 34-57 (AAAVGLGLTLFTCGPHSLHSLITI). Topologically, residues 58–73 (LGTWALIQAQPCSCHA) are cytoplasmic. The chain crosses the membrane as a helical span at residues 74-93 (LALAWTFSYLLFFRALSLLG). Topologically, residues 94–194 (LPTPTPFTNA…VPSLRPLLRR (101 aa)) are lumenal. The helical transmembrane segment at 195–212 (AWPAPLFGLLFLLSSHLF) threads the bilayer. The Cytoplasmic portion of the chain corresponds to 213–231 (PLEAVREDAFYARPLPTRL). A helical membrane pass occupies residues 232–261 (FYMIPVFFAFRMRFYVAWIAAECGCIAAGF). Residues 262–426 (GAYPVAAKAR…LSMADTLRYW (165 aa)) are Lumenal-facing. Asn-321 is a glycosylation site (N-linked (GlcNAc...) asparagine). Residues 427 to 447 (ASIYFWVHFLALACLGLGLVL) form a helical membrane-spanning segment. Residues 448-473 (GGGSPSKRKTPSQATSSQAKEKLREE) lie on the Cytoplasmic side of the membrane. The interval 451-473 (SPSKRKTPSQATSSQAKEKLREE) is disordered.

The protein belongs to the membrane-bound acyltransferase family. Interacts with SPTSSA; the interaction facilitates MBOAT7 location to mitochondria-associated membranes (MAMs).

The protein resides in the endoplasmic reticulum membrane. It catalyses the reaction a 1-acyl-sn-glycero-3-phospho-(1D-myo-inositol) + an acyl-CoA = a 1,2-diacyl-sn-glycero-3-phospho-(1D-myo-inositol) + CoA. The catalysed reaction is 1-octadecanoyl-sn-glycero-3-phospho-(1D-myo-inositol) + (5Z,8Z,11Z,14Z)-eicosatetraenoyl-CoA = 1-octadecanoyl-2-(5Z,8Z,11Z,14Z-eicosatetraenoyl)-sn-glycero-3-phospho-(1D-myo-inositol) + CoA. It carries out the reaction a 1-acyl-sn-glycero-3-phospho-(1D-myo-inositol) + (5Z,8Z,11Z,14Z)-eicosatetraenoyl-CoA = a 1-acyl-2-(5Z,8Z,11Z,14Z-eicosatetraenoyl)-sn-glycero-3-phospho-(1D-myo-inositol) + CoA. The enzyme catalyses (5Z,8Z,11Z,14Z)-eicosatetraenoyl-CoA + 1-hexadecanoyl-sn-glycero-3-phosphocholine = 1-hexadecanoyl-2-(5Z,8Z,11Z,14Z-eicosatetraenoyl)-sn-glycero-3-phosphocholine + CoA. It functions in the pathway lipid metabolism; phospholipid metabolism. Functionally, acyltransferase which catalyzes the transfer of an acyl group from an acyl-CoA to a lysophosphatidylinositol (1-acylglycerophosphatidylinositol or LPI) leading to the production of a phosphatidylinositol (1,2-diacyl-sn-glycero-3-phosphoinositol or PI) and participates in the reacylation step of the phospholipid remodeling pathway also known as the Lands cycle. Prefers arachidonoyl-CoA as the acyl donor, thus contributing to the regulation of free levels arachidonic acid in cell. In liver, participates in the regulation of triglyceride metabolism through the phosphatidylinositol acyl-chain remodeling regulation. In Mus musculus (Mouse), this protein is Membrane-bound acylglycerophosphatidylinositol O-acyltransferase MBOAT7.